A 51-amino-acid polypeptide reads, in one-letter code: ATP synthase F(1) complex subunit epsilon, mitochondrial (51 aa).

Residues Lys-21, Lys-32, and Lys-37 each carry the N6-acetyllysine; alternate modification. N6-succinyllysine; alternate is present on residues Lys-21, Lys-32, and Lys-37. The residue at position 44 (Lys-44) is an N6-acetyllysine.

The protein belongs to the eukaryotic ATPase epsilon family. As to quaternary structure, component of the ATP synthase complex composed at least of ATP5F1A/subunit alpha, ATP5F1B/subunit beta, ATP5MC1/subunit c (homooctomer), MT-ATP6/subunit a, MT-ATP8/subunit 8, ATP5ME/subunit e, ATP5MF/subunit f, ATP5MG/subunit g, ATP5MK/subunit k, ATP5MJ/subunit j, ATP5F1C/subunit gamma, ATP5F1D/subunit delta, ATP5F1E/subunit epsilon, ATP5PF/subunit F6, ATP5PB/subunit b, ATP5PD/subunit d, ATP5PO/subunit OSCP. ATP synthase complex consists of a soluble F(1) head domain (subunits alpha(3) and beta(3)) - the catalytic core - and a membrane F(0) domain - the membrane proton channel (subunits c, a, 8, e, f, g, k and j). These two domains are linked by a central stalk (subunits gamma, delta, and epsilon) rotating inside the F1 region and a stationary peripheral stalk (subunits F6, b, d, and OSCP). As to expression, ubiquitous.

Its subcellular location is the mitochondrion. It is found in the mitochondrion inner membrane. Its function is as follows. Subunit epsilon, of the mitochondrial membrane ATP synthase complex (F(1)F(0) ATP synthase or Complex V) that produces ATP from ADP in the presence of a proton gradient across the membrane which is generated by electron transport complexes of the respiratory chain. ATP synthase complex consist of a soluble F(1) head domain - the catalytic core - and a membrane F(1) domain - the membrane proton channel. These two domains are linked by a central stalk rotating inside the F(1) region and a stationary peripheral stalk. During catalysis, ATP synthesis in the catalytic domain of F(1) is coupled via a rotary mechanism of the central stalk subunits to proton translocation. In vivo, can only synthesize ATP although its ATP hydrolase activity can be activated artificially in vitro. May be essential for the assembly of F(1) and may play an important role in the incorporation of the hydrophobic subunit c into the F(1)-c oligomer rotor of the mitochondrial ATP synthase complex. This Homo sapiens (Human) protein is ATP synthase F(1) complex subunit epsilon, mitochondrial.